We begin with the raw amino-acid sequence, 229 residues long: Large ribosomal subunit protein uL1 (229 aa).

The protein belongs to the universal ribosomal protein uL1 family. Part of the 50S ribosomal subunit.

In terms of biological role, binds directly to 23S rRNA. The L1 stalk is quite mobile in the ribosome, and is involved in E site tRNA release. Its function is as follows. Protein L1 is also a translational repressor protein, it controls the translation of the L11 operon by binding to its mRNA. The sequence is that of Large ribosomal subunit protein uL1 from Flavobacterium johnsoniae (strain ATCC 17061 / DSM 2064 / JCM 8514 / BCRC 14874 / CCUG 350202 / NBRC 14942 / NCIMB 11054 / UW101) (Cytophaga johnsonae).